The primary structure comprises 181 residues: Resolvase/recombinase (181 aa).

A Resolvase/invertase-type recombinase catalytic domain is found at 2-137 (RLFGYARVST…EGRLEAKAKG (136 aa)). Ser10 (O-(5'-phospho-DNA)-serine intermediate) is an active-site residue. Residues 161 to 180 (AMEIAKRLKIGRSTVYKVLA) constitute a DNA-binding region (H-T-H motif).

The protein belongs to the site-specific recombinase resolvase family.

Functionally, site-specific recombination protein. The protein is Resolvase/recombinase of Pseudomonas putida (Arthrobacter siderocapsulatus).